The chain runs to 217 residues: Ras-related protein RABA2c (217 aa).

GTP is bound by residues 19–27 (GDSGVGKSN), 38–44 (CLESKST), 67–71 (DTAGQ), 125–128 (NKSD), and 155–157 (SAL). An Effector region motif is present at residues 41–49 (SKSTIGVEF). The segment at 195–217 (PGQGTTINVDDTSGGAKRACCSS) is disordered. S-geranylgeranyl cysteine attachment occurs at residues cysteine 214 and cysteine 215.

Belongs to the small GTPase superfamily. Rab family. Expressed in root tips.

The protein resides in the endosome membrane. Its subcellular location is the golgi apparatus. It localises to the trans-Golgi network membrane. Functionally, intracellular vesicle trafficking and protein transport. The polypeptide is Ras-related protein RABA2c (RABA2C) (Arabidopsis thaliana (Mouse-ear cress)).